Here is a 103-residue protein sequence, read N- to C-terminus: Small ribosomal subunit protein uS10 (103 aa).

Belongs to the universal ribosomal protein uS10 family. As to quaternary structure, part of the 30S ribosomal subunit.

Functionally, involved in the binding of tRNA to the ribosomes. This chain is Small ribosomal subunit protein uS10, found in Helicobacter hepaticus (strain ATCC 51449 / 3B1).